The following is a 355-amino-acid chain: Probable tRNA-dihydrouridine synthase 1 (355 aa).

FMN-binding positions include 48-50 (PLS) and Gln102. Catalysis depends on Cys132, which acts as the Proton donor. FMN-binding positions include Lys171, 232–234 (NGD), and 256–257 (SR).

It belongs to the Dus family. Requires FMN as cofactor.

It catalyses the reaction a 5,6-dihydrouridine in tRNA + NAD(+) = a uridine in tRNA + NADH + H(+). It carries out the reaction a 5,6-dihydrouridine in tRNA + NADP(+) = a uridine in tRNA + NADPH + H(+). Catalyzes the synthesis of 5,6-dihydrouridine (D), a modified base found in the D-loop of most tRNAs, via the reduction of the C5-C6 double bond in target uridines. This Synechocystis sp. (strain ATCC 27184 / PCC 6803 / Kazusa) protein is Probable tRNA-dihydrouridine synthase 1 (dus1).